A 407-amino-acid polypeptide reads, in one-letter code: Pleckstrin homology-like domain family A member 1 (407 aa).

2 stretches are compositionally biased toward basic and acidic residues: residues 1–11 (MRRTPAAERLS) and 54–63 (RSAEDGREQP). Residues 1–67 (MRRTPAAERL…DGREQPAHGS (67 aa)) form a disordered region. The region spanning 149–184 (SGCKALKEGVLEKRSDGLLQLWKKKCCILTEEGLLL) is the PH domain. 2 disordered regions span residues 188–224 (KQVQHQQQQQQQQQPGQGTAEPSQPSGPAVTSLEPPA) and 296–407 (QQHL…SNSA). Low complexity-rich tracts occupy residues 189–204 (QVQHQQQQQQQQQPGQ) and 297–319 (QHLVQQQPPQTQQIQPQPQQPQI). Positions 312–348 (PQPQQPQIQPQPQPQIQPQPQPQPQPQPQPQQQPQPQ) are 15 X 2 AA repeats of P-Q. Positions 320–344 (QPQPQPQIQPQPQPQPQPQPQPQQQ) are enriched in pro residues. The 11 X 2 AA repeats of P-H stretch occupies residues 354–381 (PHPHPHLYPHPHPHAHSHPHPHPHPHPH). The segment covering 354–384 (PHPHPHLYPHPHPHAHSHPHPHPHPHPHQLQ) has biased composition (basic residues). Over residues 385–395 (HAHQPLHSQPQ) the composition is skewed to low complexity.

As to quaternary structure, interacts with RPL14, EIF3S7 and PABPC4.

The protein resides in the cytoplasm. Its subcellular location is the cytoplasmic vesicle. It is found in the nucleus. It localises to the nucleolus. In terms of biological role, seems to be involved in regulation of apoptosis. May be involved in detachment-mediated programmed cell death. May mediate apoptosis during neuronal development. May be involved in regulation of anti-apoptotic effects of IGF1. May be involved in translational regulation. This Rattus norvegicus (Rat) protein is Pleckstrin homology-like domain family A member 1 (Phlda1).